The following is a 212-amino-acid chain: MAETKEFKTLYNLFIDSYLQKLAQHSIPTNVTCAIHIGEVIGQFKNCALRITNKCMSNTRLSFTLMVESFIEVISLLPEKDRRAIAEEIGIDLNDVPSAVSKLEKNCNAYAEVNNIIDIQKLNIGECSAPPGQHMLLQIVNTGSAGANCGLQTILKSLNKIYVPPIIENRLPYYDPWFLVGVAIILVIFTVAICSIRRNLALKYRYGTFLYV.

Residues 1 to 175 (MAETKEFKTL…IIENRLPYYD (175 aa)) are Virion surface-facing. 3 disulfide bridges follow: Cys33-Cys55, Cys47-Cys127, and Cys107-Cys149. The chain crosses the membrane as a helical span at residues 176 to 196 (PWFLVGVAIILVIFTVAICSI). The Intravirion segment spans residues 197–212 (RRNLALKYRYGTFLYV).

Belongs to the orthopoxvirus OPG053 family. Component of the entry fusion complex (EFC) composed of OPG053, OPG076, OPG086, OPG094, OPG095, OPG099, OPG107, OPG143, OPG104, OPG147 and OPG155. Except for OPG095 and OPG052, each of the EFC proteins is required for assembly or stability of the complex. Disulfid bonds are oxidized in the cytoplasm by OPG088 protein. Post-translationally, unglycosylated because produced in viral factories instead of the classic ER -Golgi route.

It localises to the virion membrane. Component of the entry fusion complex (EFC), which consists of 11 proteins. During cell infection, this complex mediates entry of the virion core into the host cytoplasm by a two-step mechanism consisting of lipid mixing of the viral and cellular membranes and subsequent pore formation. This is EFC-associated protein OPG053 (OPG053) from Homo sapiens (Human).